The primary structure comprises 405 residues: Arginine biosynthesis bifunctional protein ArgJ (405 aa).

Substrate contacts are provided by threonine 152, lysine 178, threonine 189, glutamate 276, asparagine 400, and serine 405. The active-site Nucleophile is threonine 189.

It belongs to the ArgJ family. In terms of assembly, heterotetramer of two alpha and two beta chains.

The protein localises to the cytoplasm. It carries out the reaction N(2)-acetyl-L-ornithine + L-glutamate = N-acetyl-L-glutamate + L-ornithine. The enzyme catalyses L-glutamate + acetyl-CoA = N-acetyl-L-glutamate + CoA + H(+). It participates in amino-acid biosynthesis; L-arginine biosynthesis; L-ornithine and N-acetyl-L-glutamate from L-glutamate and N(2)-acetyl-L-ornithine (cyclic): step 1/1. Its pathway is amino-acid biosynthesis; L-arginine biosynthesis; N(2)-acetyl-L-ornithine from L-glutamate: step 1/4. Functionally, catalyzes two activities which are involved in the cyclic version of arginine biosynthesis: the synthesis of N-acetylglutamate from glutamate and acetyl-CoA as the acetyl donor, and of ornithine by transacetylation between N(2)-acetylornithine and glutamate. The polypeptide is Arginine biosynthesis bifunctional protein ArgJ (Chromobacterium violaceum (strain ATCC 12472 / DSM 30191 / JCM 1249 / CCUG 213 / NBRC 12614 / NCIMB 9131 / NCTC 9757 / MK)).